The primary structure comprises 203 residues: Probable NADPH:quinone oxidoreductase 2 (203 aa).

It belongs to the SsuE family. Homotetramer. FMN is required as a cofactor.

It catalyses the reaction a quinone + NADH + H(+) = a quinol + NAD(+). The enzyme catalyses a quinone + NADPH + H(+) = a quinol + NADP(+). The enzyme apparently serves as a quinone reductase in connection with conjugation reactions of hydroquinones involved in detoxification pathways. The protein is Probable NADPH:quinone oxidoreductase 2 of Oryza sativa subsp. japonica (Rice).